Reading from the N-terminus, the 533-residue chain is Flavin-containing monooxygenase 5 (533 aa).

A Dimethylated arginine modification is found at Arg5. FAD-binding positions include 10–14, Glu33, and 41–42; these read GGGVS and LW. Ser54 carries the phosphoserine modification. The residue at position 56 (Tyr56) is a Phosphotyrosine. Phosphoserine is present on Ser58. 62–63 lines the FAD pocket; the sequence is NT. An NADP(+)-binding site is contributed by 196 to 199; it reads SGGD. Ser280 bears the Phosphoserine mark. Thr284 carries the post-translational modification Phosphothreonine. Phosphoserine is present on Ser401. A helical transmembrane segment spans residues 513–533; the sequence is TMTIGKFMLALAFFAIIIAYF.

It belongs to the FMO family. FAD serves as cofactor. In terms of tissue distribution, expressed in fetal and adult liver.

The protein resides in the microsome membrane. The protein localises to the endoplasmic reticulum membrane. The catalysed reaction is N,N-dimethylaniline + NADPH + O2 + H(+) = N,N-dimethylaniline N-oxide + NADP(+) + H2O. The enzyme catalyses NADPH + O2 + H(+) = H2O2 + NADP(+). It carries out the reaction heptan-2-one + NADPH + O2 + H(+) = pentyl acetate + NADP(+) + H2O. It catalyses the reaction octan-3-one + NADPH + O2 + H(+) = pentyl propanoate + NADP(+) + H2O. The catalysed reaction is octan-3-one + NADPH + O2 + H(+) = ethyl hexanoate + NADP(+) + H2O. The enzyme catalyses hexan-3-one + NADPH + O2 + H(+) = ethyl butanoate + NADP(+) + H2O. It carries out the reaction hexan-3-one + NADPH + O2 + H(+) = propyl propanoate + NADP(+) + H2O. It catalyses the reaction heptan-4-one + NADPH + O2 + H(+) = propyl butanoate + NADP(+) + H2O. The catalysed reaction is (2E)-geranial + NADPH + O2 + H(+) = (1E)-2,6-dimethylhepta-1,5-dien-1-yl formate + NADP(+) + H2O. The enzyme catalyses sulcatone + NADPH + O2 + H(+) = 4-methylpent-3-en-1-yl acetate + NADP(+) + H2O. Its function is as follows. Acts as a Baeyer-Villiger monooxygenase on a broad range of substrates. Catalyzes the insertion of an oxygen atom into a carbon-carbon bond adjacent to a carbonyl, which converts ketones to esters. Active on diverse carbonyl compounds, whereas soft nucleophiles are mostly non- or poorly reactive. In contrast with other forms of FMO it is non- or poorly active on 'classical' substrates such as drugs, pesticides, and dietary components containing soft nucleophilic heteroatoms. Able to oxidize drug molecules bearing a carbonyl group on an aliphatic chain, such as nabumetone and pentoxifylline. Also, in the absence of substrates, shows slow but yet significant NADPH oxidase activity. Acts as a positive modulator of cholesterol biosynthesis as well as glucose homeostasis, promoting metabolic aging via pleiotropic effects. The chain is Flavin-containing monooxygenase 5 from Homo sapiens (Human).